A 521-amino-acid polypeptide reads, in one-letter code: Cytochrome P450 1A1 (521 aa).

A substrate-binding site is contributed by Phe229. Position 463 (Cys463) interacts with heme.

This sequence belongs to the cytochrome P450 family. It depends on heme as a cofactor.

The protein localises to the endoplasmic reticulum membrane. Its subcellular location is the microsome membrane. The catalysed reaction is an organic molecule + reduced [NADPH--hemoprotein reductase] + O2 = an alcohol + oxidized [NADPH--hemoprotein reductase] + H2O + H(+). Its function is as follows. Cytochromes P450 are a group of heme-thiolate monooxygenases. They oxidize a variety of structurally unrelated compounds, including steroids, fatty acids, and xenobiotics. This is Cytochrome P450 1A1 (cyp1a1) from Limanda limanda (Common dab).